Reading from the N-terminus, the 306-residue chain is Homoserine kinase (306 aa).

95 to 105 (PHSRGLGSSAA) is an ATP binding site.

The protein belongs to the GHMP kinase family. Homoserine kinase subfamily.

It localises to the cytoplasm. The catalysed reaction is L-homoserine + ATP = O-phospho-L-homoserine + ADP + H(+). It participates in amino-acid biosynthesis; L-threonine biosynthesis; L-threonine from L-aspartate: step 4/5. Catalyzes the ATP-dependent phosphorylation of L-homoserine to L-homoserine phosphate. This Mycobacteroides abscessus (strain ATCC 19977 / DSM 44196 / CCUG 20993 / CIP 104536 / JCM 13569 / NCTC 13031 / TMC 1543 / L948) (Mycobacterium abscessus) protein is Homoserine kinase.